The following is a 540-amino-acid chain: NXPE family member 1 (540 aa).

Positions 1–22 are cleaved as a signal peptide; that stretch reads MLHKYLKLICLLAAICVLCIIS. N-linked (GlcNAc...) asparagine glycosylation is found at Asn-24, Asn-42, Asn-87, Asn-155, Asn-205, and Asn-291.

This sequence belongs to the NXPE family. As to expression, intestine, and to a lesser extent in kidney.

The protein localises to the secreted. The sequence is that of NXPE family member 1 (NXPE1) from Oryctolagus cuniculus (Rabbit).